Here is a 327-residue protein sequence, read N- to C-terminus: Serum response factor homolog (327 aa).

The disordered stretch occupies residues 12–43; that stretch reads QKLQNASPALPEGTSSTPTPSSSTGLLPNGKK. Positions 25–35 are enriched in low complexity; sequence TSSTPTPSSST. One can recognise an MADS-box domain in the interval 45-105; it reads KGRVKIKMEY…GHVYTYATPK (61 aa). Residues 189-225 form a disordered region; sequence TFGEDDYNNDESGDDSDSEEASSDIKEEYQGSPTMVK. Positions 191–210 are enriched in acidic residues; it reads GEDDYNNDESGDDSDSEEAS.

As to expression, expressed in muscle, varying with age, decreasing twofold during the first week of adulthood.

The protein localises to the nucleus. In terms of biological role, transcription factor. Regulates myogenesis, in cooperation with transcription factors hlh-1 and hnd-1. Required for maintenance of muscle in adulthood. The chain is Serum response factor homolog from Caenorhabditis elegans.